Reading from the N-terminus, the 150-residue chain is Ribosome maturation factor RimP (150 aa).

This sequence belongs to the RimP family.

The protein localises to the cytoplasm. Functionally, required for maturation of 30S ribosomal subunits. This chain is Ribosome maturation factor RimP, found in Francisella tularensis subsp. mediasiatica (strain FSC147).